The sequence spans 180 residues: Trichosurin (180 aa).

Positions 1-15 (MKLLLLSMGLALVCG) are cleaved as a signal peptide. Residues N67 and N148 are each glycosylated (N-linked (GlcNAc...) asparagine). A disulfide bridge links C87 with C180.

It belongs to the calycin superfamily. Lipocalin family. As to quaternary structure, homodimer. Milk.

It localises to the secreted. In Trichosurus vulpecula (Brush-tailed possum), this protein is Trichosurin.